Here is a 420-residue protein sequence, read N- to C-terminus: MSKIKVVHPIVEMDGDEQTRVIWKLIKEKLILPYLDVDLKYYDLSIQERDRTNDQVTKDSSYATLKYGVAVKCATITPDEARMKEFNLKEMWKSPNGTIRNILGGTVFREPIIIPKIPRLVPHWEKPIIIGRHAFGDQYRATDIKIKKAGKLRLQFSSDDGKENIDLKVYEFPKSGGIAMAMFNTNDSIKGFAKASFELALKRKLPLFFTTKNTILKNYDNQFKQIFDNLFDKEYKEKFQALKITYEHRLIDDMVAQMLKSKGGFIIAMKNYDGDVQSDIVAQGFGSLGLMTSILITPDGKTFESEAAHGTVTRHFRKHQRGEETSTNSIASIFAWTRAIIQRGKLDNTDDVIKFGNLLEKATLDTVQVGGKMTKDLALMLGKTNRSSYVTTEEFIDEVAKRLQNMMLSSNEDKKGMCKL.

Residues 75–77 (TIT) and arginine 82 contribute to the NADP(+) site. Threonine 77 is a substrate binding site. Substrate is bound by residues 94 to 100 (SPNGTIR), arginine 109, and arginine 132. Aspartate 252 lines the Mn(2+) pocket. Lysine 260 lines the NADP(+) pocket. Aspartate 275 is a Mn(2+) binding site. NADP(+) is bound by residues 310-315 (GTVTRH) and asparagine 328.

It belongs to the isocitrate and isopropylmalate dehydrogenases family. Mg(2+) serves as cofactor. It depends on Mn(2+) as a cofactor.

It carries out the reaction D-threo-isocitrate + NADP(+) = 2-oxoglutarate + CO2 + NADPH. In terms of biological role, may function in the production of NADPH for fatty acid and sterol synthesis. The sequence is that of Isocitrate dehydrogenase [NADP] (IDP3) from Saccharomyces cerevisiae (strain ATCC 204508 / S288c) (Baker's yeast).